The sequence spans 464 residues: MGVSKLDILYRRLLLTKLFIRGWGRPEDLKRLFEFRKMIGNRERCQNLVSSDYPVHIDKVEEQSDCKILDGHFVSPMAHYVPGIMPIESVIARFQFIVPKEWNSRYRPVCIHLAGTGDHHYWRRRTLMARPMIKEARMASLLLENPYYILLKPKDQVRSSLKNVSDLFVMGGALILESAALLHWLEREGYGPLGMTGISMGGHMASLAVSNWPKPMPLIPCLSWSTASGVFTTGVLSKSINWRELEKQYYTQTVYEEEIIHMLEYCGTDSFKMGHEFMKHFPSNEDKLTNLNLVSRTLNLDMRDQVVSPKHAECHHSGKASISATSKGQLLQDTAKVERLNQTLTTNKSCFASYNPQSLHLLSREQRRSNLQKESLIFMKGVMDECTHVANFSVPVDPSLIIVVQAKEDAYIPRTGVRSLQEIWPGCEIRYLEGGHISAYLFKQGLFRQAIYDAFERFLHKYAN.

The first 24 residues, 1–24 (MGVSKLDILYRRLLLTKLFIRGWG), serve as a signal peptide directing secretion. The N-linked (GlcNAc...) asparagine glycan is linked to Asn341.

It belongs to the AB hydrolase superfamily.

It localises to the secreted. This chain is Protein ABHD18, found in Rattus norvegicus (Rat).